A 246-amino-acid polypeptide reads, in one-letter code: Zorya protein ZorB (246 aa).

A helical transmembrane segment spans residues 20-40 (FWISYADLMTAMMVLFLVVMV). The OmpA-like domain occupies 86-218 (CHDNRISFGE…RVELRMQFFG (133 aa)).

It belongs to the MotB family.

Its subcellular location is the cell inner membrane. Functionally, component of antiviral defense system Zorya type I, composed of ZorA, ZorB, ZorC and ZorD. Expression of Zorya type I in E.coli (strain MG1655) confers 10,000-fold resistance to phage SECphi27, 100-fold resistance to lambda, and 10-fold resistance to T7. While most T7 infected Zorya-containing cells undergo abortive infection, a minority produce viable phage progeny. These eventually accumulate to a high multiplicity of infection, leading to culture collapse by 2 hours after initial infection. ZorA and ZorB probably assemble in the cell inner membrane and exert their effect there. This Escherichia coli O139:H28 (strain E24377A / ETEC) protein is Zorya protein ZorB.